We begin with the raw amino-acid sequence, 100 residues long: NADH-quinone oxidoreductase subunit K 1 (100 aa).

Transmembrane regions (helical) follow at residues 3-23, 28-48, and 60-80; these read IIKAYIILSIALFLIGLLGVI, LITVLVSTELMLNGINLALVA, and IFAFFVLTVAAAEVAVGLGLI.

It belongs to the complex I subunit 4L family. In terms of assembly, NDH-1 is composed of 14 different subunits. Subunits NuoA, H, J, K, L, M, N constitute the membrane sector of the complex.

The protein localises to the cell inner membrane. It carries out the reaction a quinone + NADH + 5 H(+)(in) = a quinol + NAD(+) + 4 H(+)(out). In terms of biological role, NDH-1 shuttles electrons from NADH, via FMN and iron-sulfur (Fe-S) centers, to quinones in the respiratory chain. The immediate electron acceptor for the enzyme in this species is believed to be ubiquinone. Couples the redox reaction to proton translocation (for every two electrons transferred, four hydrogen ions are translocated across the cytoplasmic membrane), and thus conserves the redox energy in a proton gradient. The sequence is that of NADH-quinone oxidoreductase subunit K 1 from Aquifex aeolicus (strain VF5).